The primary structure comprises 174 residues: Peptide deformylase (174 aa).

Fe cation is bound by residues Cys-94 and His-136. Residue Glu-137 is part of the active site. His-140 contributes to the Fe cation binding site.

This sequence belongs to the polypeptide deformylase family. Requires Fe(2+) as cofactor.

It carries out the reaction N-terminal N-formyl-L-methionyl-[peptide] + H2O = N-terminal L-methionyl-[peptide] + formate. Its function is as follows. Removes the formyl group from the N-terminal Met of newly synthesized proteins. Requires at least a dipeptide for an efficient rate of reaction. N-terminal L-methionine is a prerequisite for activity but the enzyme has broad specificity at other positions. The sequence is that of Peptide deformylase from Rhizobium meliloti (strain 1021) (Ensifer meliloti).